The chain runs to 251 residues: Hydroxyacylglutathione hydrolase (251 aa).

Zn(2+)-binding residues include histidine 53, histidine 55, aspartate 57, histidine 58, histidine 110, aspartate 127, and histidine 165.

It belongs to the metallo-beta-lactamase superfamily. Glyoxalase II family. In terms of assembly, monomer. Zn(2+) serves as cofactor.

It carries out the reaction an S-(2-hydroxyacyl)glutathione + H2O = a 2-hydroxy carboxylate + glutathione + H(+). The protein operates within secondary metabolite metabolism; methylglyoxal degradation; (R)-lactate from methylglyoxal: step 2/2. Its function is as follows. Thiolesterase that catalyzes the hydrolysis of S-D-lactoyl-glutathione to form glutathione and D-lactic acid. This chain is Hydroxyacylglutathione hydrolase, found in Escherichia coli O9:H4 (strain HS).